The chain runs to 363 residues: Peptide chain release factor 1 (363 aa).

At Q237 the chain carries N5-methylglutamine. The segment covering 286 to 296 (EKRRSAEESTR) has biased composition (basic and acidic residues). The tract at residues 286-305 (EKRRSAEESTRRSLVASGDR) is disordered.

It belongs to the prokaryotic/mitochondrial release factor family. Post-translationally, methylated by PrmC. Methylation increases the termination efficiency of RF1.

The protein localises to the cytoplasm. Its function is as follows. Peptide chain release factor 1 directs the termination of translation in response to the peptide chain termination codons UAG and UAA. The sequence is that of Peptide chain release factor 1 from Shewanella baltica (strain OS155 / ATCC BAA-1091).